We begin with the raw amino-acid sequence, 104 residues long: Circadian clock oscillator protein KaiB (104 aa).

This sequence belongs to the KaiB family. As to quaternary structure, the KaiABC complex composition changes during the circadian cycle to control KaiC phosphorylation. Complexes KaiC(6), KaiA(2-4):KaiC(6), KaiB(6):KaiC(6) and KaiC(6):KaiB(6):KaiA(12) are among the most important forms, many form cooperatively. Undergoes a major conformational rearrangment; in the free state forms homotetramers as a dimer of dimers. When bound to the CI domain of KaiC switches to a monomeric thioredoxin-fold (KaiB(fs)). KaiB(fs) binds CikA, leading it to dephosphorylate phospho-RpaA.

In terms of biological role, key component of the KaiABC oscillator complex, which constitutes the main circadian regulator in cyanobacteria. Complex composition changes during the circadian cycle to control KaiC phosphorylation. KaiA stimulates KaiC autophosphorylation, while KaiB sequesters KaiA, leading to KaiC autodephosphorylation. Phospho-Ser-431 KaiC accumulation triggers binding of KaiB to form the KaiB(6):KaiC(6) complex, leading to changes in output regulators CikA and SasA. KaiB switches to a thioredoxin-like fold (KaiB(fs)) when bound to KaiC. KaiB(6):KaiC(6) formation exposes a site for KaiA binding that sequesters KaiA from KaiC, making the KaiC(6):KaiB(6):KaiA(12) complex that results in KaiC autodephosphorylation. A metamorphic protein which reversibly switches between an inactive tetrameric fold and a rare, thioredoxin-like monomeric fold (KaiB(fs)). KaiB(fs) binds phospho-KaiC, KaiA and CikA. KaiA and CikA compete for binding to KaiB(fs), and KaiB(fs) and SasA compete for binding to KaiC, thus the clock oscillator and output signal pathway are tightly coupled. This chain is Circadian clock oscillator protein KaiB, found in Acaryochloris marina (strain MBIC 11017).